The chain runs to 43 residues: Protein PsbN (43 aa).

The helical transmembrane segment at 7–27 threads the bilayer; that stretch reads IAIFISGLLVSFTGYALYTAF.

Belongs to the PsbN family.

It localises to the plastid. The protein localises to the chloroplast thylakoid membrane. Functionally, may play a role in photosystem I and II biogenesis. The polypeptide is Protein PsbN (Suaeda maritima (Annual sea blite)).